A 370-amino-acid polypeptide reads, in one-letter code: CST complex subunit STN1 (370 aa).

The segment at 1–187 (MESNSSQCED…KVYDQPFHSP (187 aa)) is interaction with CTC1. The OB DNA-binding region spans 57-157 (VDILGTVIGV…EIHATTYYKV (101 aa)). Winged helix-turn-helix (wHTH) regions lie at residues 193 to 297 (EALS…YVTR) and 298 to 370 (EDKE…YTAF).

It belongs to the STN1 family. Component of the CST complex, composed of TEN1/C17orf106, CTC1/C17orf68 and STN1; in the complex interacts directly with TEN1 and CTC1. Interacts with ACD/TPP1, POT1 and POLA1.

It localises to the nucleus. Its subcellular location is the chromosome. The protein resides in the telomere. Functionally, component of the CST complex proposed to act as a specialized replication factor promoting DNA replication under conditions of replication stress or natural replication barriers such as the telomere duplex. The CST complex binds single-stranded DNA with high affinity in a sequence-independent manner, while isolated subunits bind DNA with low affinity by themselves. Initially the CST complex has been proposed to protect telomeres from DNA degradation. However, the CST complex has been shown to be involved in several aspects of telomere replication. The CST complex inhibits telomerase and is involved in telomere length homeostasis; it is proposed to bind to newly telomerase-synthesized 3' overhangs and to terminate telomerase action implicating the association with the ACD:POT1 complex thus interfering with its telomerase stimulation activity. The CST complex is also proposed to be involved in fill-in synthesis of the telomeric C-strand probably implicating recruitment and activation of DNA polymerase alpha. The CST complex facilitates recovery from many forms of exogenous DNA damage; seems to be involved in the re-initiation of DNA replication at repaired forks and/or dormant origins. Required for efficicient replication of the duplex region of the telomere. Promotes efficient replication of lagging-strand telomeres. Promotes general replication start following replication-fork stalling implicating new origin firing. May be in involved in C-strand fill-in during late S/G2 phase independent of its role in telomere duplex replication. The protein is CST complex subunit STN1 of Bos taurus (Bovine).